A 468-amino-acid chain; its full sequence is Mitochondrial dynamics protein MID51 (468 aa).

Residues 1 to 29 (MAGVNGDRKGKKDDNGLGTAIDFVLSNAK) are Mitochondrial intermembrane-facing. The helical transmembrane segment at 30 to 47 (LVLGVGGAAMLGIATLAV) threads the bilayer. Topologically, residues 48–468 (KRMYDRALSA…SDPESLLRTV (421 aa)) are cytoplasmic. Residues 50–196 (MYDRALSAPS…LSGSLYDDLQ (147 aa)) are dimerization. The tract at residues 56–123 (SAPSSPTKAD…RGLARGGRPA (68 aa)) is disordered. Over residues 91 to 108 (QNVSRSLQTLPTSSSSFK) the composition is skewed to polar residues. Positions 161-170 (AALDICAELR) are important for interaction with DNM1L. ADP-binding residues include Ser-188, Ser-190, and His-202. Residues 235 to 244 (RRENLEYFPR) form an important for interaction with DNM1L region. ADP-binding residues include Ser-344, Arg-346, and Lys-372.

This sequence belongs to the MID49/MID51 family. As to quaternary structure, homodimer.

It is found in the mitochondrion outer membrane. Mitochondrial outer membrane protein which regulates mitochondrial fission/fusion dynamics. Promotes the recruitment and association of the fission mediator dynamin-related protein 1 (DNM1L) to the mitochondrial surface independently of the mitochondrial fission FIS1 and MFF proteins. Regulates DNM1L GTPase activity and DNM1L oligomerization. In Danio rerio (Zebrafish), this protein is Mitochondrial dynamics protein MID51 (mief1).